A 287-amino-acid polypeptide reads, in one-letter code: ATP synthase gamma chain (287 aa).

This sequence belongs to the ATPase gamma chain family. F-type ATPases have 2 components, CF(1) - the catalytic core - and CF(0) - the membrane proton channel. CF(1) has five subunits: alpha(3), beta(3), gamma(1), delta(1), epsilon(1). CF(0) has three main subunits: a, b and c.

It is found in the cell inner membrane. In terms of biological role, produces ATP from ADP in the presence of a proton gradient across the membrane. The gamma chain is believed to be important in regulating ATPase activity and the flow of protons through the CF(0) complex. This Alkalilimnicola ehrlichii (strain ATCC BAA-1101 / DSM 17681 / MLHE-1) protein is ATP synthase gamma chain.